The chain runs to 241 residues: UPF0280 protein MK0206 (241 aa).

Belongs to the UPF0280 family.

In Methanopyrus kandleri (strain AV19 / DSM 6324 / JCM 9639 / NBRC 100938), this protein is UPF0280 protein MK0206.